The following is a 179-amino-acid chain: Probable inosine/xanthosine triphosphatase (179 aa).

Residue 13–18 (STNPVK) coordinates substrate. Mg(2+) is bound at residue Q70.

The protein belongs to the YjjX NTPase family. Homodimer. The cofactor is Mg(2+). It depends on Mn(2+) as a cofactor.

The enzyme catalyses XTP + H2O = XDP + phosphate + H(+). It catalyses the reaction ITP + H2O = IDP + phosphate + H(+). Functionally, phosphatase that hydrolyzes non-canonical purine nucleotides such as XTP and ITP to their respective diphosphate derivatives. Probably excludes non-canonical purines from DNA/RNA precursor pool, thus preventing their incorporation into DNA/RNA and avoiding chromosomal lesions. In Methanocaldococcus jannaschii (strain ATCC 43067 / DSM 2661 / JAL-1 / JCM 10045 / NBRC 100440) (Methanococcus jannaschii), this protein is Probable inosine/xanthosine triphosphatase.